The primary structure comprises 275 residues: MQCHRDLALSQALWGWQLSKQSGWAHPSLPHSPLPSTVHSCSWAPPHLQRHLPLATVSPGTTQLTQGPAGRTLGQTQASCPEPRPSMDAVDATMEKLRAQCLSRGASGIQGLARFFRQLDRDGSRSLDADEFRQGLAKLGLVLDQAEAEGVCRKWDRNGSGTLDLEEFLRALRPPMSQAREAVIAAAFAKLDRSGDGVVTVDDLRGVYSGRAHPKVRSGEWTEDEVLRRFLDNFDSSEKDGQVTLAEFQDYYSGVSASMNTDEEFVAMMTSAWQL.

The interval 59–87 (PGTTQLTQGPAGRTLGQTQASCPEPRPSM) is disordered. EF-hand domains follow at residues 107-142 (SGIQ…LGLV), 143-178 (LDQA…PMSQ), 179-214 (AREA…RAHP), and 222-258 (TEDE…VSAS). Residues aspartate 120, aspartate 122, serine 124, serine 126, glutamate 131, aspartate 156, asparagine 158, serine 160, threonine 162, glutamate 167, aspartate 192, serine 194, aspartate 196, and aspartate 203 each coordinate Ca(2+). Phosphoserine; by PKA is present on serine 126.

Monomer. Does not form oligomers in the presence of calcium.

It localises to the cytoplasm. Its function is as follows. Calcium-binding protein. May play a role in cellular signaling events (Potential). The sequence is that of Calcyphosin from Homo sapiens (Human).